The sequence spans 361 residues: Phosphoserine aminotransferase (361 aa).

Arginine 42 contacts L-glutamate. Pyridoxal 5'-phosphate is bound by residues 76-77 (GR), tryptophan 102, threonine 154, aspartate 173, and glutamine 196. Residue lysine 197 is modified to N6-(pyridoxal phosphate)lysine. 238–239 (NT) lines the pyridoxal 5'-phosphate pocket.

It belongs to the class-V pyridoxal-phosphate-dependent aminotransferase family. SerC subfamily. In terms of assembly, homodimer. It depends on pyridoxal 5'-phosphate as a cofactor.

The protein localises to the cytoplasm. It carries out the reaction O-phospho-L-serine + 2-oxoglutarate = 3-phosphooxypyruvate + L-glutamate. The catalysed reaction is 4-(phosphooxy)-L-threonine + 2-oxoglutarate = (R)-3-hydroxy-2-oxo-4-phosphooxybutanoate + L-glutamate. The protein operates within amino-acid biosynthesis; L-serine biosynthesis; L-serine from 3-phospho-D-glycerate: step 2/3. It participates in cofactor biosynthesis; pyridoxine 5'-phosphate biosynthesis; pyridoxine 5'-phosphate from D-erythrose 4-phosphate: step 3/5. Functionally, catalyzes the reversible conversion of 3-phosphohydroxypyruvate to phosphoserine and of 3-hydroxy-2-oxo-4-phosphonooxybutanoate to phosphohydroxythreonine. The sequence is that of Phosphoserine aminotransferase from Idiomarina loihiensis (strain ATCC BAA-735 / DSM 15497 / L2-TR).